The sequence spans 256 residues: Spore coat polysaccharide biosynthesis protein SpsA (256 aa).

A disulfide bridge links C155 with C243. D191 is an active-site residue.

It belongs to the glycosyltransferase 2 family. In terms of assembly, monomer in solution.

Its pathway is spore coat biogenesis; spore coat polysaccharide biosynthesis. Glycosyltransferase implicated in the synthesis of the spore coat. This chain is Spore coat polysaccharide biosynthesis protein SpsA (spsA), found in Bacillus subtilis (strain 168).